A 274-amino-acid polypeptide reads, in one-letter code: Diaminopimelate epimerase (274 aa).

N11, Q44, and N64 together coordinate substrate. C73 functions as the Proton donor in the catalytic mechanism. Residues G74–N75, N157, N190, and E208–R209 contribute to the substrate site. The active-site Proton acceptor is the C217. G218–S219 is a substrate binding site.

This sequence belongs to the diaminopimelate epimerase family. Homodimer.

Its subcellular location is the cytoplasm. It carries out the reaction (2S,6S)-2,6-diaminopimelate = meso-2,6-diaminopimelate. It functions in the pathway amino-acid biosynthesis; L-lysine biosynthesis via DAP pathway; DL-2,6-diaminopimelate from LL-2,6-diaminopimelate: step 1/1. Its function is as follows. Catalyzes the stereoinversion of LL-2,6-diaminopimelate (L,L-DAP) to meso-diaminopimelate (meso-DAP), a precursor of L-lysine and an essential component of the bacterial peptidoglycan. The chain is Diaminopimelate epimerase from Yersinia pseudotuberculosis serotype O:1b (strain IP 31758).